The sequence spans 275 residues: Light-independent protochlorophyllide reductase iron-sulfur ATP-binding protein (275 aa).

Residues 12 to 17 (GIGKST) and Lys-41 each bind ATP. Ser-16 is a Mg(2+) binding site. 2 residues coordinate [4Fe-4S] cluster: Cys-97 and Cys-131. Residue 182-183 (NR) coordinates ATP.

Belongs to the NifH/BchL/ChlL family. As to quaternary structure, homodimer. Protochlorophyllide reductase is composed of three subunits; BchL, BchN and BchB. [4Fe-4S] cluster serves as cofactor.

The catalysed reaction is chlorophyllide a + oxidized 2[4Fe-4S]-[ferredoxin] + 2 ADP + 2 phosphate = protochlorophyllide a + reduced 2[4Fe-4S]-[ferredoxin] + 2 ATP + 2 H2O. Its pathway is porphyrin-containing compound metabolism; bacteriochlorophyll biosynthesis (light-independent). Component of the dark-operative protochlorophyllide reductase (DPOR) that uses Mg-ATP and reduced ferredoxin to reduce ring D of protochlorophyllide (Pchlide) to form chlorophyllide a (Chlide). This reaction is light-independent. The L component serves as a unique electron donor to the NB-component of the complex, and binds Mg-ATP. In Pelodictyon phaeoclathratiforme (strain DSM 5477 / BU-1), this protein is Light-independent protochlorophyllide reductase iron-sulfur ATP-binding protein.